Reading from the N-terminus, the 239-residue chain is UPF0173 metal-dependent hydrolase Dvul_0081 (239 aa).

The protein belongs to the UPF0173 family.

This chain is UPF0173 metal-dependent hydrolase Dvul_0081, found in Nitratidesulfovibrio vulgaris (strain DP4) (Desulfovibrio vulgaris).